Consider the following 301-residue polypeptide: Glycine cleavage system transcriptional activator homolog (301 aa).

The 58-residue stretch at 10-67 (PPLNSLKSFESAARYLSFTKAADELCVTQAAVSHQIKLLEXFLGIDLFKRKNRSLELT) folds into the HTH lysR-type domain. Residues 27–46 (FTKAADELCVTQAAVSHQIK) constitute a DNA-binding region (H-T-H motif).

It belongs to the LysR transcriptional regulatory family.

The protein localises to the cytoplasm. Its function is as follows. Not known, the gcv operon regulated by the E.coli homolog does not exist in H.influenzae, so it probably acts as a transcriptional regulator on some other operon. The protein is Glycine cleavage system transcriptional activator homolog (gcvA) of Haemophilus influenzae (strain ATCC 51907 / DSM 11121 / KW20 / Rd).